The sequence spans 128 residues: Protein C10 (128 aa).

This sequence belongs to the UPF0456 family.

The protein resides in the cytoplasm. This is Protein C10 from Xenopus laevis (African clawed frog).